The primary structure comprises 121 residues: Large ribosomal subunit protein bL20 (121 aa).

Belongs to the bacterial ribosomal protein bL20 family.

In terms of biological role, binds directly to 23S ribosomal RNA and is necessary for the in vitro assembly process of the 50S ribosomal subunit. It is not involved in the protein synthesizing functions of that subunit. This chain is Large ribosomal subunit protein bL20, found in Wolbachia pipientis subsp. Culex pipiens (strain wPip).